A 403-amino-acid polypeptide reads, in one-letter code: MAFLTAVLCFGFACMVQGVPSWLESRIPLLGSSVASKHPSLLDGNRHHRDMKYPFYMMQLYQNLVMANDTGLARGHNTATKEYDTVLSLFAKRCMESEKRWTLSFDMSAVSKSSELKLAELRIQLPHIEMSHNVTVDVYHTRDGEENLYLGSFEANPFSTKGSPWKVFNVTRILQHYFKEGQDIKSEYLRTKDRAERGSGMSSAEFLDSPGDSPQYNPHHTPLRRYLSTEGVMLVLFTKVKPSVNHIGFPSLIKTAESSKYVDMEKASRMPGIRRHRRNKNEKHHLSMGSIPSRHVDNGKPLCRRVDMIVNFEDIGWGNWIVYPKKYNAYRCEGACPIPLNETFKPTNHAYMKSVVKLYQPEKVECPLCVPIKMSPLSMLYYEGDEVVLRHHQEMIVEECGCS.

Positions 1–18 are cleaved as a signal peptide; it reads MAFLTAVLCFGFACMVQG. Residues 19-278 constitute a propeptide that is removed on maturation; that stretch reads VPSWLESRIP…RMPGIRRHRR (260 aa). Asparagine 68, asparagine 133, and asparagine 169 each carry an N-linked (GlcNAc...) asparagine glycan. Positions 195 to 220 are disordered; the sequence is AERGSGMSSAEFLDSPGDSPQYNPHH. 3 disulfides stabilise this stretch: cysteine 303-cysteine 369, cysteine 332-cysteine 400, and cysteine 336-cysteine 402. Asparagine 341 is a glycosylation site (N-linked (GlcNAc...) asparagine).

The protein belongs to the TGF-beta family. In terms of assembly, homodimer; disulfide-linked. Interacts with, and is inhibited by cer1 and gdf10/bmp3b.

The protein localises to the secreted. Functionally, cooperation and regulatory loops of multiple nodals are essential for mesendoderm patterning in early embryos. Essential for mesoderm formation and axial patterning during embryonic development. Activates the activin-like signaling pathway to induce dorsal and ventral mesoderm in animal cap ectoderm. In addition, also dorsalizes ventral marginal zone (VMZ) tissues during gastrulation. Acts in a downstream signaling cascade via cripto and cer1 to mediate cardiogenesis in embryonic mesoderm. Directs the orientation of the left-right axis by driving the left-specific gene cascade in the left lateral plate mesoderm. The sequence is that of Nodal homolog from Xenopus tropicalis (Western clawed frog).